The sequence spans 348 residues: Dihydroorotase (348 aa).

Residues histidine 17 and histidine 19 each contribute to the Zn(2+) site. Residues histidine 19–arginine 21 and asparagine 45 contribute to the substrate site. Positions 103, 140, and 178 each coordinate Zn(2+). At lysine 103 the chain carries N6-carboxylysine. Histidine 140 is a binding site for substrate. Substrate is bound at residue leucine 223. Aspartate 251 provides a ligand contact to Zn(2+). Aspartate 251 is an active-site residue. Substrate-binding residues include histidine 255 and alanine 267.

Belongs to the metallo-dependent hydrolases superfamily. DHOase family. Class II DHOase subfamily. In terms of assembly, homodimer. The cofactor is Zn(2+).

The catalysed reaction is (S)-dihydroorotate + H2O = N-carbamoyl-L-aspartate + H(+). The protein operates within pyrimidine metabolism; UMP biosynthesis via de novo pathway; (S)-dihydroorotate from bicarbonate: step 3/3. Its function is as follows. Catalyzes the reversible cyclization of carbamoyl aspartate to dihydroorotate. The chain is Dihydroorotase from Salmonella heidelberg (strain SL476).